Reading from the N-terminus, the 296-residue chain is HVA22-like protein i (296 aa).

The segment at 146 to 296 (STPRPQPPQK…LRKTRSEESR (151 aa)) is disordered. Over residues 180–193 (VSLSSSSSSSSSEN) the composition is skewed to low complexity. Over residues 223-233 (AGTTQIAQKSV) the composition is skewed to polar residues. The span at 251–261 (QIEEVEGEAES) shows a compositional bias: acidic residues. A compositionally biased stretch (basic and acidic residues) spans 270–281 (GPKETVMEETIR).

The protein belongs to the DP1 family.

The polypeptide is HVA22-like protein i (HVA22I) (Arabidopsis thaliana (Mouse-ear cress)).